Here is a 319-residue protein sequence, read N- to C-terminus: 4-hydroxy-3-methylbut-2-enyl diphosphate reductase (319 aa).

Residue Cys-17 coordinates [4Fe-4S] cluster. His-46 and His-79 together coordinate (2E)-4-hydroxy-3-methylbut-2-enyl diphosphate. 2 residues coordinate dimethylallyl diphosphate: His-46 and His-79. Positions 46 and 79 each coordinate isopentenyl diphosphate. Cys-101 contacts [4Fe-4S] cluster. His-129 is a (2E)-4-hydroxy-3-methylbut-2-enyl diphosphate binding site. Residue His-129 coordinates dimethylallyl diphosphate. Isopentenyl diphosphate is bound at residue His-129. Catalysis depends on Glu-131, which acts as the Proton donor. Residue Thr-170 participates in (2E)-4-hydroxy-3-methylbut-2-enyl diphosphate binding. Cys-200 contributes to the [4Fe-4S] cluster binding site. Residues Ser-228, Ser-229, Asn-230, and Ser-273 each contribute to the (2E)-4-hydroxy-3-methylbut-2-enyl diphosphate site. 4 residues coordinate dimethylallyl diphosphate: Ser-228, Ser-229, Asn-230, and Ser-273. 4 residues coordinate isopentenyl diphosphate: Ser-228, Ser-229, Asn-230, and Ser-273.

Belongs to the IspH family. [4Fe-4S] cluster serves as cofactor.

It carries out the reaction isopentenyl diphosphate + 2 oxidized [2Fe-2S]-[ferredoxin] + H2O = (2E)-4-hydroxy-3-methylbut-2-enyl diphosphate + 2 reduced [2Fe-2S]-[ferredoxin] + 2 H(+). The catalysed reaction is dimethylallyl diphosphate + 2 oxidized [2Fe-2S]-[ferredoxin] + H2O = (2E)-4-hydroxy-3-methylbut-2-enyl diphosphate + 2 reduced [2Fe-2S]-[ferredoxin] + 2 H(+). Its pathway is isoprenoid biosynthesis; dimethylallyl diphosphate biosynthesis; dimethylallyl diphosphate from (2E)-4-hydroxy-3-methylbutenyl diphosphate: step 1/1. It participates in isoprenoid biosynthesis; isopentenyl diphosphate biosynthesis via DXP pathway; isopentenyl diphosphate from 1-deoxy-D-xylulose 5-phosphate: step 6/6. Functionally, catalyzes the conversion of 1-hydroxy-2-methyl-2-(E)-butenyl 4-diphosphate (HMBPP) into a mixture of isopentenyl diphosphate (IPP) and dimethylallyl diphosphate (DMAPP). Acts in the terminal step of the DOXP/MEP pathway for isoprenoid precursor biosynthesis. This is 4-hydroxy-3-methylbut-2-enyl diphosphate reductase from Cereibacter sphaeroides (strain ATCC 17023 / DSM 158 / JCM 6121 / CCUG 31486 / LMG 2827 / NBRC 12203 / NCIMB 8253 / ATH 2.4.1.) (Rhodobacter sphaeroides).